Consider the following 470-residue polypeptide: MAEFPFEISPMFEGERVRKEGMFVELGGPKSLGLELVRAKPMDEIEDDKVTIVGPDLKEMEEGKTYPWAMIFNIGGELVEPDLESVVERRVHDFINYCQGIMHLNQRYDVWMRVSKDTAAKMDSFEPFGQAVMMLFKTELPFIEKMQVTFYTEQAEVEKQLEEAKAIFKARDERTKDLHDEDVDVFYGCTLCQSFAPTNVCVVSPDRVSLCGAINWFDGRAAAKVDPEGPQFEITKGDLIDAEKGEYTGVNDIAKKLSAGEFDKIKLHSFFDAPHTSCGCFEVVGFYIPEVDGIGWVNREYQGMAPNGIGFSTMAGQTGGGKQIVGFLGIGINYFYSPKFIQADGGWNRVVWLPSMLKDKIAETIPEDLKDKIATENDATDIESLKAFLQEKGHPVVATWAAAEEEEEEEEEEEEEVAVAAAPMMMPAAGFQMPAMPMMSGGSSGGIKLTFKNAKITIDKMIISEKKEKK.

[Ni-Fe-S] cluster contacts are provided by Cys-189, Cys-192, Cys-278, and Cys-280.

Belongs to the CdhC family. Monomer. The ACDS complex is made up of alpha, epsilon, beta, gamma and delta chains with a probable stoichiometry of (alpha(2)epsilon(2))(4)-beta(8)-(gamma(1)delta(1))(8) (Potential). Requires [Ni-Fe-S] cluster as cofactor.

The catalysed reaction is Co(I)-[corrinoid Fe-S protein] + acetyl-CoA + H(+) = methyl-Co(III)-[corrinoid Fe-S protein] + CO + CoA. Its pathway is one-carbon metabolism; methanogenesis from acetate. Part of a complex that catalyzes the reversible cleavage of acetyl-CoA, allowing growth on acetate as sole source of carbon and energy. The alpha-epsilon complex generates CO from CO(2), while the beta subunit (this protein) combines the CO with CoA and a methyl group to form acetyl-CoA. The methyl group, which is incorporated into acetyl-CoA, is transferred to the beta subunit by a corrinoid iron-sulfur protein (the gamma-delta complex). The chain is Acetyl-CoA decarbonylase/synthase complex subunit beta 2 (cdhC2) from Methanosarcina acetivorans (strain ATCC 35395 / DSM 2834 / JCM 12185 / C2A).